Consider the following 142-residue polypeptide: Hemoglobin subunit epsilon (142 aa).

The 140-residue stretch at 3–142 folds into the Globin domain; sequence HFTAEEKAAI…KLVSAVAIAL (140 aa). A phosphoserine mark is found at Ser14 and Ser51. Heme b contacts are provided by His64 and His93.

This sequence belongs to the globin family. In terms of assembly, heterotetramer of two alpha chains and two epsilon chains in early embryonic hemoglobin Gower-2; two zeta chains and two epsilon chains in early embryonic hemoglobin Gower-1. As to expression, red blood cells.

Functionally, the epsilon chain is a beta-type chain of early mammalian embryonic hemoglobin. This chain is Hemoglobin subunit epsilon (HBE1), found in Callithrix geoffroyi (Geoffroy's marmoset).